Here is a 195-residue protein sequence, read N- to C-terminus: Pyruvoyl-dependent arginine decarboxylase AaxB (195 aa).

Serine 53 carries the post-translational modification Pyruvic acid (Ser).

Belongs to the pyruvoyl-dependent arginine decarboxylase family. Trimer of an alpha-beta dimer. Pyruvate is required as a cofactor.

It is found in the cytoplasm. The catalysed reaction is L-arginine + H(+) = agmatine + CO2. Inhibited by argininamide. Functionally, part of the AaxABC system, catalyzes the decarboxylation of L-arginine. The arginine uptake by the bacterium in the macrophage may be a virulence factor against the host innate immune response. The protein is Pyruvoyl-dependent arginine decarboxylase AaxB (aaxB) of Chlamydia pneumoniae (Chlamydophila pneumoniae).